The following is a 379-amino-acid chain: Chaperone protein DnaJ (379 aa).

The J domain maps to 7-72 (DYYEVLGVDK…KKRSMYDQFG (66 aa)). The segment at 147–225 (GKKAELSYTR…CGGNGLERKK (79 aa)) adopts a CR-type zinc-finger fold. Zn(2+)-binding residues include Cys-160, Cys-163, Cys-177, Cys-180, Cys-199, Cys-202, Cys-213, and Cys-216. CXXCXGXG motif repeat units lie at residues 160 to 167 (CSECHGTG), 177 to 184 (CPDCKGTG), 199 to 206 (CPTCGGEG), and 213 to 220 (CKKCGGNG).

This sequence belongs to the DnaJ family. As to quaternary structure, homodimer. Zn(2+) serves as cofactor.

Its subcellular location is the cytoplasm. Its function is as follows. Participates actively in the response to hyperosmotic and heat shock by preventing the aggregation of stress-denatured proteins and by disaggregating proteins, also in an autonomous, DnaK-independent fashion. Unfolded proteins bind initially to DnaJ; upon interaction with the DnaJ-bound protein, DnaK hydrolyzes its bound ATP, resulting in the formation of a stable complex. GrpE releases ADP from DnaK; ATP binding to DnaK triggers the release of the substrate protein, thus completing the reaction cycle. Several rounds of ATP-dependent interactions between DnaJ, DnaK and GrpE are required for fully efficient folding. Also involved, together with DnaK and GrpE, in the DNA replication of plasmids through activation of initiation proteins. In Treponema denticola (strain ATCC 35405 / DSM 14222 / CIP 103919 / JCM 8153 / KCTC 15104), this protein is Chaperone protein DnaJ.